A 502-amino-acid chain; its full sequence is ATP synthase subunit alpha (502 aa).

Position 169 to 176 (169 to 176 (GDRQTGKT)) interacts with ATP.

It belongs to the ATPase alpha/beta chains family. As to quaternary structure, F-type ATPases have 2 components, CF(1) - the catalytic core - and CF(0) - the membrane proton channel. CF(1) has five subunits: alpha(3), beta(3), gamma(1), delta(1), epsilon(1). CF(0) has three main subunits: a(1), b(2) and c(9-12). The alpha and beta chains form an alternating ring which encloses part of the gamma chain. CF(1) is attached to CF(0) by a central stalk formed by the gamma and epsilon chains, while a peripheral stalk is formed by the delta and b chains.

Its subcellular location is the cell inner membrane. The catalysed reaction is ATP + H2O + 4 H(+)(in) = ADP + phosphate + 5 H(+)(out). Produces ATP from ADP in the presence of a proton gradient across the membrane. The alpha chain is a regulatory subunit. The sequence is that of ATP synthase subunit alpha from Nitratidesulfovibrio vulgaris (strain DSM 19637 / Miyazaki F) (Desulfovibrio vulgaris).